The following is a 546-amino-acid chain: DDB1- and CUL4-associated factor 11 (546 aa).

Residues 1-10 are compositionally biased toward polar residues; the sequence is MGSRNSSSAG. Positions 1-40 are disordered; the sequence is MGSRNSSSAGTGSGDPSEGLPRRGAGLRRSEEEEEEDEDV. Phosphoserine occurs at positions 73 and 75. Residues 79–100 are disordered; the sequence is HDSAWDGRLGDRYNPPVDATPD. The segment covering 80 to 89 has biased composition (basic and acidic residues); it reads DSAWDGRLGD. WD repeat units lie at residues 170 to 210, 216 to 258, 263 to 302, 305 to 345, 353 to 392, 435 to 480, and 481 to 520; these read TYSQ…RKFK, DVGW…TALD, ERRF…RTLQ, SHED…EDDP, GHQD…SREG, GVLH…KKLT, and THKA…YFQD. The tract at residues 521–546 is disordered; it reads DMPESEEHPSTPAPMSHPSTAFSSPQ. The span at 537 to 546 shows a compositional bias: polar residues; it reads HPSTAFSSPQ.

Interacts with DDB1 and CUL4A.

It functions in the pathway protein modification; protein ubiquitination. Its function is as follows. May function as a substrate receptor for CUL4-DDB1 E3 ubiquitin-protein ligase complex. In Bos taurus (Bovine), this protein is DDB1- and CUL4-associated factor 11 (DCAF11).